Reading from the N-terminus, the 470-residue chain is Adenosylhomocysteinase (470 aa).

Substrate is bound by residues T61, D136, and E196. NAD(+) is bound at residue 197–199 (TTT). Substrate contacts are provided by K226 and D230. NAD(+) contacts are provided by residues N231, 260-265 (GYGDVG), E283, N318, 339-341 (IGH), and N384.

This sequence belongs to the adenosylhomocysteinase family. Requires NAD(+) as cofactor.

The protein localises to the cytoplasm. It carries out the reaction S-adenosyl-L-homocysteine + H2O = L-homocysteine + adenosine. The protein operates within amino-acid biosynthesis; L-homocysteine biosynthesis; L-homocysteine from S-adenosyl-L-homocysteine: step 1/1. Functionally, may play a key role in the regulation of the intracellular concentration of adenosylhomocysteine. The polypeptide is Adenosylhomocysteinase (Aromatoleum aromaticum (strain DSM 19018 / LMG 30748 / EbN1) (Azoarcus sp. (strain EbN1))).